Reading from the N-terminus, the 743-residue chain is Pentatricopeptide repeat-containing protein At2g16880 (743 aa).

PPR repeat units lie at residues 130 to 164, 165 to 202, 203 to 233, 239 to 273, 274 to 308, 309 to 343, 344 to 378, 379 to 414, 415 to 449, 450 to 484, 485 to 519, 520 to 554, 555 to 589, 590 to 620, 624 to 658, and 659 to 689; these read SKALFDIALSAYLHEGKPHVALQIFQKMIRLKLKP, NLLTCNTLLIGLVRYPSSFSISSAREVFDDMVKIGVSL, NVQTFNVLVNGYCLEGKLEDALGMLERMVSE, DNVTYNTILKAMSKKGRLSDLKELLLDMKKNGLVP, NRVTYNNLVYGYCKLGSLKEAFQIVELMKQTNVLP, DLCTYNILINGLCNAGSMREGLELMDAMKSLKLQP, DVVTYNTLIDGCFELGLSLEARKLMEQMENDGVKA, NQVTHNISLKWLCKEEKREAVTRKVKELVDMHGFSP, DIVTYHTLIKAYLKVGDLSGALEMMREMGQKGIKM, NTITLNTILDALCKERKLDEAHNLLNSAHKRGFIV, DEVTYGTLIMGFFREEKVEKALEMWDEMKKVKITP, TVSTFNSLIGGLCHHGKTELAMEKFDELAESGLLP, DDSTFNSIILGYCKEGRVEKAFEFYNESIKHSFKP, DNYTCNILLNGLCKEGMTEKALNFFNTLIEE, DTVTYNTMISAFCKDKKLKEAYDLLSEMEEKGLEP, and DRFTYNSFISLLMEDGKLSETDELLKKFSGK.

The protein belongs to the PPR family. P subfamily.

This Arabidopsis thaliana (Mouse-ear cress) protein is Pentatricopeptide repeat-containing protein At2g16880.